The chain runs to 211 residues: Small ribosomal subunit protein uS4 (211 aa).

Residues 98 to 161 (RRLDNVVYRL…RDIPFIKENL (64 aa)) form the S4 RNA-binding domain.

It belongs to the universal ribosomal protein uS4 family. In terms of assembly, part of the 30S ribosomal subunit. Contacts protein S5. The interaction surface between S4 and S5 is involved in control of translational fidelity.

Functionally, one of the primary rRNA binding proteins, it binds directly to 16S rRNA where it nucleates assembly of the body of the 30S subunit. In terms of biological role, with S5 and S12 plays an important role in translational accuracy. The polypeptide is Small ribosomal subunit protein uS4 (Aquifex aeolicus (strain VF5)).